A 429-amino-acid polypeptide reads, in one-letter code: Adenylosuccinate synthetase (429 aa).

Residues 12–18 (GDEGKGK) and 40–42 (GHT) each bind GTP. The active-site Proton acceptor is aspartate 13. Mg(2+)-binding residues include aspartate 13 and glycine 40. IMP is bound by residues 13-16 (DEGK), 38-41 (NAGH), threonine 129, arginine 143, glutamine 223, threonine 238, and arginine 302. Histidine 41 serves as the catalytic Proton donor. A substrate-binding site is contributed by 298 to 304 (VVTGRKR). GTP-binding positions include arginine 304, 330-332 (KLD), and 412-414 (STS).

The protein belongs to the adenylosuccinate synthetase family. Homodimer. The cofactor is Mg(2+).

The protein localises to the cytoplasm. The enzyme catalyses IMP + L-aspartate + GTP = N(6)-(1,2-dicarboxyethyl)-AMP + GDP + phosphate + 2 H(+). It participates in purine metabolism; AMP biosynthesis via de novo pathway; AMP from IMP: step 1/2. Plays an important role in the de novo pathway of purine nucleotide biosynthesis. Catalyzes the first committed step in the biosynthesis of AMP from IMP. This is Adenylosuccinate synthetase from Brucella ovis (strain ATCC 25840 / 63/290 / NCTC 10512).